Consider the following 224-residue polypeptide: MIAIIKFPGTTCETDVYKALIEAGVPTVIVKYKDFDPDRYNGVILPGGFSFGDYLRAGSIAASTETMKKVKQMAEDGKIVIGICNGFQILVESGLLKGALLPNLKLRFISKWVYLKVIRADTILTKGLDKKIIRMPIAHAEGRYYVDDIDYAKTHMVLQYCDENGNISEDVNPNGSLLNIASIANEEGNVIGMMPHPERASFKLTSIDGTVDGLILLRRLGEWA.

The Glutamine amidotransferase type-1 domain occupies 1–224 (MIAIIKFPGT…ILLRRLGEWA (224 aa)). Cys-84 (nucleophile) is an active-site residue. Residues His-196 and Glu-198 contribute to the active site.

In terms of assembly, part of the FGAM synthase complex composed of 1 PurL, 1 PurQ and 2 PurS subunits.

The protein resides in the cytoplasm. The catalysed reaction is N(2)-formyl-N(1)-(5-phospho-beta-D-ribosyl)glycinamide + L-glutamine + ATP + H2O = 2-formamido-N(1)-(5-O-phospho-beta-D-ribosyl)acetamidine + L-glutamate + ADP + phosphate + H(+). It catalyses the reaction L-glutamine + H2O = L-glutamate + NH4(+). It participates in purine metabolism; IMP biosynthesis via de novo pathway; 5-amino-1-(5-phospho-D-ribosyl)imidazole from N(2)-formyl-N(1)-(5-phospho-D-ribosyl)glycinamide: step 1/2. Part of the phosphoribosylformylglycinamidine synthase complex involved in the purines biosynthetic pathway. Catalyzes the ATP-dependent conversion of formylglycinamide ribonucleotide (FGAR) and glutamine to yield formylglycinamidine ribonucleotide (FGAM) and glutamate. The FGAM synthase complex is composed of three subunits. PurQ produces an ammonia molecule by converting glutamine to glutamate. PurL transfers the ammonia molecule to FGAR to form FGAM in an ATP-dependent manner. PurS interacts with PurQ and PurL and is thought to assist in the transfer of the ammonia molecule from PurQ to PurL. This Saccharolobus solfataricus (strain ATCC 35092 / DSM 1617 / JCM 11322 / P2) (Sulfolobus solfataricus) protein is Phosphoribosylformylglycinamidine synthase subunit PurQ.